Reading from the N-terminus, the 140-residue chain is Putative peptidyl-tRNA hydrolase PTRHD1 (140 aa).

Belongs to the PTH2 family. PTRHD1 subfamily.

The catalysed reaction is an N-acyl-L-alpha-aminoacyl-tRNA + H2O = an N-acyl-L-amino acid + a tRNA + H(+). In terms of biological role, as a putative peptidyl-tRNA hydrolase, it might be involved in releasing tRNAs from the ribosome during protein synthesis. Some evidence, however, suggests that it lacks peptidyl-tRNA hydrolase activity. The protein is Putative peptidyl-tRNA hydrolase PTRHD1 (Ptrhd1) of Mus musculus (Mouse).